A 432-amino-acid polypeptide reads, in one-letter code: 3-chlorobenzoate-3,4-dioxygenase oxygenase subunit (432 aa).

Residues 27-133 (WIPALKSTEL…VKEMAGVVWV (107 aa)) form the Rieske domain. Positions 69, 71, 88, and 91 each coordinate [2Fe-2S] cluster. 2 residues coordinate Fe cation: His180 and His185.

Belongs to the bacterial ring-hydroxylating dioxygenase alpha subunit family. This dioxygenase system consists of two proteins: an oxygenase and an oxygenase reductase. Requires [2Fe-2S] cluster as cofactor. The cofactor is Fe cation.

The protein is 3-chlorobenzoate-3,4-dioxygenase oxygenase subunit (cbaA) of Comamonas testosteroni (Pseudomonas testosteroni).